Consider the following 238-residue polypeptide: Ribosomal RNA small subunit methyltransferase G (238 aa).

S-adenosyl-L-methionine contacts are provided by residues Gly-77, Phe-82, 128–129 (AE), and Arg-147.

This sequence belongs to the methyltransferase superfamily. RNA methyltransferase RsmG family.

The protein localises to the cytoplasm. Functionally, specifically methylates the N7 position of guanine in position 535 of 16S rRNA. This chain is Ribosomal RNA small subunit methyltransferase G, found in Brevibacillus brevis (strain 47 / JCM 6285 / NBRC 100599).